Reading from the N-terminus, the 660-residue chain is Bifunctional polymyxin resistance protein ArnA (660 aa).

The interval 1–304 (MKTVVFAYHD…TLGLVQGSRL (304 aa)) is formyltransferase ArnAFT. 86 to 88 (HLI) lines the (6R)-10-formyltetrahydrofolate pocket. H104 acts as the Proton donor; for formyltransferase activity in catalysis. (6R)-10-formyltetrahydrofolate contacts are provided by residues R114 and 136–140 (VTRAD). The interval 314-660 (RRTRVLILGV…RTVDLTDKPS (347 aa)) is dehydrogenase ArnADH. NAD(+) is bound by residues D347 and 368-369 (DI). UDP-alpha-D-glucuronate contacts are provided by residues A393, Y398, and 432-433 (TS). E434 (proton acceptor; for decarboxylase activity) is an active-site residue. Residues R460, N492, 526 to 535 (KLIDGGKQKR), and Y613 contribute to the UDP-alpha-D-glucuronate site. R619 serves as the catalytic Proton donor; for decarboxylase activity.

In the N-terminal section; belongs to the Fmt family. UDP-L-Ara4N formyltransferase subfamily. This sequence in the C-terminal section; belongs to the NAD(P)-dependent epimerase/dehydratase family. UDP-glucuronic acid decarboxylase subfamily. In terms of assembly, homohexamer, formed by a dimer of trimers.

The catalysed reaction is UDP-alpha-D-glucuronate + NAD(+) = UDP-beta-L-threo-pentopyranos-4-ulose + CO2 + NADH. The enzyme catalyses UDP-4-amino-4-deoxy-beta-L-arabinose + (6R)-10-formyltetrahydrofolate = UDP-4-deoxy-4-formamido-beta-L-arabinose + (6S)-5,6,7,8-tetrahydrofolate + H(+). Its pathway is nucleotide-sugar biosynthesis; UDP-4-deoxy-4-formamido-beta-L-arabinose biosynthesis; UDP-4-deoxy-4-formamido-beta-L-arabinose from UDP-alpha-D-glucuronate: step 1/3. It functions in the pathway nucleotide-sugar biosynthesis; UDP-4-deoxy-4-formamido-beta-L-arabinose biosynthesis; UDP-4-deoxy-4-formamido-beta-L-arabinose from UDP-alpha-D-glucuronate: step 3/3. It participates in bacterial outer membrane biogenesis; lipopolysaccharide biosynthesis. Bifunctional enzyme that catalyzes the oxidative decarboxylation of UDP-glucuronic acid (UDP-GlcUA) to UDP-4-keto-arabinose (UDP-Ara4O) and the addition of a formyl group to UDP-4-amino-4-deoxy-L-arabinose (UDP-L-Ara4N) to form UDP-L-4-formamido-arabinose (UDP-L-Ara4FN). The modified arabinose is attached to lipid A and is required for resistance to polymyxin and cationic antimicrobial peptides. In Shigella dysenteriae serotype 1 (strain Sd197), this protein is Bifunctional polymyxin resistance protein ArnA.